We begin with the raw amino-acid sequence, 334 residues long: MRIGIDAMGGDNAPHAVIEGVALYLKENRDDEIVIFGDKNIIEEECVQKVQPLDKLEIIDCKEKIEFEDEPVKAIRQKKDSSIVVGLQYLKEGKIDAFVSAGSTGALMAGGLLIVGRIKGIDRPALTTRLPYKDGQYLLIDVGSNTDCRPINILQFAQMATVYVSKVLGKKNPTVGLLNIGTEENKGNDLSKQSYELLKSAKNINFVGNVEARSLPFSPPDIVVCDGFVGNIVLKLTEGMGLLFFDILKDIAKSSFRAQIGGLLLKPYLKRLKGKYDYKEVGGAPLLGIDGIIVKCHGSSDGQAIFSGIHQAKAFYENNVLALLKEEITAESEV.

Belongs to the PlsX family. In terms of assembly, homodimer. Probably interacts with PlsY.

The protein resides in the cytoplasm. It catalyses the reaction a fatty acyl-[ACP] + phosphate = an acyl phosphate + holo-[ACP]. It participates in lipid metabolism; phospholipid metabolism. Catalyzes the reversible formation of acyl-phosphate (acyl-PO(4)) from acyl-[acyl-carrier-protein] (acyl-ACP). This enzyme utilizes acyl-ACP as fatty acyl donor, but not acyl-CoA. In Caldicellulosiruptor bescii (strain ATCC BAA-1888 / DSM 6725 / KCTC 15123 / Z-1320) (Anaerocellum thermophilum), this protein is Phosphate acyltransferase.